A 247-amino-acid polypeptide reads, in one-letter code: ATP synthase subunit a, chloroplastic (247 aa).

5 consecutive transmembrane segments (helical) span residues Gln-38–Val-58, Val-95–Leu-115, Ile-134–Ser-154, Leu-199–Leu-219, and Gly-220–Gly-240.

The protein belongs to the ATPase A chain family. As to quaternary structure, F-type ATPases have 2 components, CF(1) - the catalytic core - and CF(0) - the membrane proton channel. CF(1) has five subunits: alpha(3), beta(3), gamma(1), delta(1), epsilon(1). CF(0) has four main subunits: a, b, b' and c.

Its subcellular location is the plastid. It localises to the chloroplast thylakoid membrane. In terms of biological role, key component of the proton channel; it plays a direct role in the translocation of protons across the membrane. The protein is ATP synthase subunit a, chloroplastic of Oryza sativa subsp. indica (Rice).